Reading from the N-terminus, the 248-residue chain is Type II secretion system protein N (248 aa).

The Cytoplasmic segment spans residues 1–6 (MKLKSG). A helical; Signal-anchor for type II membrane protein transmembrane segment spans residues 7–27 (IVTGVALVLAYGLFLASYAPA). The Periplasmic segment spans residues 28–248 (RLLTAVPLPA…RTLNFQGRLL (221 aa)).

It belongs to the GSP N family.

It localises to the cell inner membrane. Functionally, involved in a type II secretion system (T2SS, formerly general secretion pathway, GSP) for the export of proteins. Required for the translocation of the multiple pectic enzymes. In Pectobacterium carotovorum subsp. carotovorum (Erwinia carotovora subsp. carotovora), this protein is Type II secretion system protein N (outN).